The primary structure comprises 595 residues: Elongation factor 4 (595 aa).

One can recognise a tr-type G domain in the interval 2 to 184 (SHIRNFSIIA…RLVATIPAPT (183 aa)). Residues 14–19 (DHGKST) and 131–134 (NKMD) each bind GTP.

Belongs to the TRAFAC class translation factor GTPase superfamily. Classic translation factor GTPase family. LepA subfamily.

The protein resides in the cell inner membrane. The enzyme catalyses GTP + H2O = GDP + phosphate + H(+). Its function is as follows. Required for accurate and efficient protein synthesis under certain stress conditions. May act as a fidelity factor of the translation reaction, by catalyzing a one-codon backward translocation of tRNAs on improperly translocated ribosomes. Back-translocation proceeds from a post-translocation (POST) complex to a pre-translocation (PRE) complex, thus giving elongation factor G a second chance to translocate the tRNAs correctly. Binds to ribosomes in a GTP-dependent manner. This Pseudomonas savastanoi pv. phaseolicola (strain 1448A / Race 6) (Pseudomonas syringae pv. phaseolicola (strain 1448A / Race 6)) protein is Elongation factor 4.